The sequence spans 302 residues: Acetylxylan esterase (302 aa).

The signal sequence occupies residues 1–20; it reads MPSVKETLTLLLSQAFLATG. Positions 21 to 31 are excised as a propeptide; the sequence is SPVDGETVVKR. At glutamine 32 the chain carries Pyrrolidone carboxylic acid. Asparagine 94 carries an N-linked (GlcNAc...) asparagine glycan. Serine 121 is a catalytic residue. Residues 236–273 are disordered; sequence QLSSGGSQPPGGGPTSTSRPTSTRTGSSPGPTQTHWGQ. A linker region spans residues 244–266; the sequence is PPGGGPTSTSRPTSTRTGSSPGP. The segment covering 250-269 has biased composition (low complexity); the sequence is TSTSRPTSTRTGSSPGPTQT. A CBM1 domain is found at 266-302; that stretch reads PTQTHWGQCGGQGWTGPTQCESGTTCQVISQWYSQCL. 2 disulfides stabilise this stretch: cysteine 274/cysteine 291 and cysteine 285/cysteine 301.

The protein belongs to the cutinase family. Acetylxylan esterase subfamily. As to quaternary structure, monomer. Glycosylated.

The protein resides in the secreted. The catalysed reaction is Deacetylation of xylans and xylo-oligosaccharides.. It functions in the pathway glycan degradation; xylan degradation. Inhibited by phenylmethylsulfonyl flouride. Degrades acetylated xylans by cleaving acetyl side groups from the hetero-xylan backbone. The sequence is that of Acetylxylan esterase (axe1) from Hypocrea jecorina (Trichoderma reesei).